A 463-amino-acid polypeptide reads, in one-letter code: Lipase 5 (463 aa).

An N-terminal signal peptide occupies residues 1–14; that stretch reads MLYLILFLIAPIYA. Cysteine 110 and cysteine 281 are joined by a disulfide. Catalysis depends on serine 194, which acts as the Charge relay system. Asparagine 229 carries an N-linked (GlcNAc...) asparagine glycan. Catalysis depends on charge relay system residues aspartate 343 and histidine 376. Cysteine 359 and cysteine 404 are disulfide-bonded.

The protein belongs to the AB hydrolase superfamily. Lipase family. Class Lip subfamily.

The protein localises to the secreted. It carries out the reaction a triacylglycerol + H2O = a diacylglycerol + a fatty acid + H(+). Its activity is regulated as follows. Fe(2)+, Fe(3+), Hg(2+) as well as ethylenediaminetetraacetic acid (EDTA) and phenylmethanesulfonyl fluoride (PMSF) strongly inhibit the lipase activity. Surfactants such as Tween 20, Tween 80 and TritonX-100 show also inhibitory effect in the lipase activity. Sodium dodecyl sulfate (SDS) sharply decreases the lipase activity by 85%. Methanol, ethanol, and acetone have also negative effect on the lipase activity, with residual activities at 48%, 24% and 44% respectively. Finally, lipase activity is almost lost in the presence of isopropanol alcohol. Secreted lipase that is able to hydrolyze both the neutral triacylglycerols and the monopalmitate ester Tween 40, allowing the use of hydrolyzed products as carbon sources. Exhibits a preference for the short and medium chain length p-NP (C4 and C8 acyl group) esters rather than the long chain length p-NP esters (C12, C16 and C18 acyl group). Has broad lipolytic activity, which may be important for colonization and subsequent infection, therefore contributing to the persistence and virulence in human tissue. This is Lipase 5 from Candida albicans (strain SC5314 / ATCC MYA-2876) (Yeast).